Consider the following 335-residue polypeptide: Phosphate acyltransferase (335 aa).

It belongs to the PlsX family. As to quaternary structure, homodimer. Probably interacts with PlsY.

It is found in the cytoplasm. The catalysed reaction is a fatty acyl-[ACP] + phosphate = an acyl phosphate + holo-[ACP]. Its pathway is lipid metabolism; phospholipid metabolism. Functionally, catalyzes the reversible formation of acyl-phosphate (acyl-PO(4)) from acyl-[acyl-carrier-protein] (acyl-ACP). This enzyme utilizes acyl-ACP as fatty acyl donor, but not acyl-CoA. The sequence is that of Phosphate acyltransferase from Clostridium botulinum (strain Langeland / NCTC 10281 / Type F).